Consider the following 1035-residue polypeptide: POM121-like protein 2 (1035 aa).

6 disordered regions span residues 1–37, 177–213, 286–343, 415–508, 754–791, and 972–1035; these read MGSFLSKLELSPSSPAQVRTDLPERPTKRRPPQPLHQ, LFPESLDSKRRSPETRPSAFKPLMKNGTLTSFVPRPG, IKKE…LGYA, LGPL…QSTL, SPLGSSSRPPFPLSQGANPQPAFGATNGQKQGPSQPAL, and NTPV…AYKK. Over residues 27–37 the composition is skewed to basic residues; the sequence is TKRRPPQPLHQ. Over residues 309–319 the composition is skewed to low complexity; the sequence is GGSESSGQQNQ. Composition is skewed to polar residues over residues 320-330, 420-431, and 445-462; these read KIPQLPSSPEN, SPQSTGEATSVA, and GCSQSELLPGTSPDSKPT. A compositionally biased stretch (low complexity) spans 464–481; it reads TFILLTPTSPTLPVTDTT. Over residues 493 to 502 the composition is skewed to pro residues; it reads PMPPDPPAPP. Over residues 1000 to 1016 the composition is skewed to low complexity; that stretch reads RGPFRSSASSFSIGAKS. The segment covering 1017–1035 has biased composition (basic residues); the sequence is KTPKNREKGHSRRHHAYKK.

This sequence belongs to the POM121 family.

This Homo sapiens (Human) protein is POM121-like protein 2 (POM121L2).